We begin with the raw amino-acid sequence, 486 residues long: Membrane-bound lytic murein transglycosylase F (486 aa).

A signal peptide spans Met-1–Ala-21. Positions Leu-22–Val-268 are non-LT domain. An LT domain region spans residues Gly-269–Asp-486. Residue Glu-313 is part of the active site.

It in the N-terminal section; belongs to the bacterial solute-binding protein 3 family. In the C-terminal section; belongs to the transglycosylase Slt family.

The protein localises to the cell outer membrane. It catalyses the reaction Exolytic cleavage of the (1-&gt;4)-beta-glycosidic linkage between N-acetylmuramic acid (MurNAc) and N-acetylglucosamine (GlcNAc) residues in peptidoglycan, from either the reducing or the non-reducing ends of the peptidoglycan chains, with concomitant formation of a 1,6-anhydrobond in the MurNAc residue.. Its function is as follows. Murein-degrading enzyme that degrades murein glycan strands and insoluble, high-molecular weight murein sacculi, with the concomitant formation of a 1,6-anhydromuramoyl product. Lytic transglycosylases (LTs) play an integral role in the metabolism of the peptidoglycan (PG) sacculus. Their lytic action creates space within the PG sacculus to allow for its expansion as well as for the insertion of various structures such as secretion systems and flagella. The chain is Membrane-bound lytic murein transglycosylase F from Yersinia pestis bv. Antiqua (strain Antiqua).